The following is a 515-amino-acid chain: 1-pyrroline-5-carboxylate dehydrogenase (515 aa).

Catalysis depends on residues glutamate 286 and cysteine 320.

It belongs to the aldehyde dehydrogenase family. RocA subfamily.

The enzyme catalyses L-glutamate 5-semialdehyde + NAD(+) + H2O = L-glutamate + NADH + 2 H(+). The protein operates within amino-acid degradation; L-proline degradation into L-glutamate; L-glutamate from L-proline: step 2/2. This chain is 1-pyrroline-5-carboxylate dehydrogenase, found in Bacillus pumilus (strain SAFR-032).